Reading from the N-terminus, the 106-residue chain is A-type ATP synthase subunit F (106 aa).

It belongs to the V-ATPase F subunit family. Has multiple subunits with at least A(3), B(3), C, D, E, F, H, I and proteolipid K(x).

It localises to the cell membrane. Functionally, component of the A-type ATP synthase that produces ATP from ADP in the presence of a proton gradient across the membrane. The sequence is that of A-type ATP synthase subunit F from Methanothermobacter thermautotrophicus (strain ATCC 29096 / DSM 1053 / JCM 10044 / NBRC 100330 / Delta H) (Methanobacterium thermoautotrophicum).